We begin with the raw amino-acid sequence, 225 residues long: Probable septum site-determining protein MinC (225 aa).

Belongs to the MinC family. Interacts with MinD and FtsZ.

Its function is as follows. Cell division inhibitor that blocks the formation of polar Z ring septums. Rapidly oscillates between the poles of the cell to destabilize FtsZ filaments that have formed before they mature into polar Z rings. Prevents FtsZ polymerization. This chain is Probable septum site-determining protein MinC, found in Listeria monocytogenes serotype 4b (strain CLIP80459).